Reading from the N-terminus, the 1982-residue chain is CASP8-associated protein 2 (1982 aa).

An N-acetylalanine modification is found at alanine 2. Phosphoserine is present on serine 20. The span at 159-191 shows a compositional bias: basic and acidic residues; it reads VKTKDLKSRSPHLDDCSKTDHRAKSDVSKDVHH. The tract at residues 159 to 552 is disordered; that stretch reads VKTKDLKSRS…ESGPNETKNK (394 aa). Serine 194 bears the Phosphoserine mark. The segment covering 198–210 has biased composition (basic and acidic residues); it reads LEKEGKPHSDKRS. A compositionally biased stretch (polar residues) spans 225–240; the sequence is GVWSRSHYQVGEGSSN. The span at 286-395 shows a compositional bias: basic and acidic residues; it reads GHPEKYGKGE…ERASLPHSKN (110 aa). Polar residues predominate over residues 396 to 405; sequence EITFSHNSSK. 3 stretches are compositionally biased toward basic and acidic residues: residues 406 to 423, 444 to 455, and 463 to 524; these read YHLE…DKSV, KNIDSKEVDAMH, and KAER…KGEV. Serine 567 is subject to Phosphoserine. Positions 569 to 593 are disordered; sequence AKKQPVSQDNQHKITDIPKSSGVCD. Residues serine 658, serine 815, and serine 875 each carry the phosphoserine modification. Disordered regions lie at residues 875 to 1017, 1157 to 1188, and 1251 to 1283; these read SPPQ…DKVM, FGRD…DNSN, and ERSL…HATL. Over residues 894-904 the composition is skewed to polar residues; it reads SAHSTSKSQSD. Composition is skewed to basic and acidic residues over residues 905–924, 936–965, 999–1016, and 1157–1170; these read LNKE…EADT, GEIR…DVRK, KRPD…KDKV, and FGRD…EKTS. The residue at position 940 (serine 940) is a Phosphoserine. Residue serine 1161 is modified to Phosphoserine. Composition is skewed to polar residues over residues 1171 to 1181 and 1269 to 1281; these read KQNAQYSNSQK and GSSI…SQHA. Residue lysine 1343 is modified to N6-acetyllysine. Positions 1683-1687 match the SUMO interaction motif 1 (SIM); mediates the binding to polysumoylated substrates motif; it reads YVDLT. The tract at residues 1709–1982 is NCOA2-binding; that stretch reads DQLGCSGGNL…MKLFEKSKCR (274 aa). The SUMO interaction motif 2 (SIM); mediates the binding to polysumoylated substrates signature appears at 1737–1741; the sequence is FIDLT. The SUMO interaction motif 3 (SIM); mediates the binding to polysumoylated substrates signature appears at 1794-1798; it reads YIDLT. The interval 1803–1909 is disordered; sequence SSCEVKKDEL…IKDSSAALAT (107 aa). A compositionally biased stretch (basic and acidic residues) spans 1851–1865; it reads KETDLTNKEKTKKPT.

In terms of assembly, self-associates. Component of the death-inducing signaling complex (DISC) with CASP8, FADD and FAS. Interacts with NCOA2 and NCOA3. Interacts with SRRT. Interacts with TRAF2. Interacts with NPAT. Interacts (via SIM domains) with SUMO1 and SUMO2. Interacts with SP100; may negatively regulate CASP8AP2 export from the nucleus to the cytoplasm.

The protein localises to the cytoplasm. It localises to the nucleus. It is found in the PML body. The protein resides in the mitochondrion. Functionally, participates in TNF-alpha-induced blockade of glucocorticoid receptor (GR) transactivation at the nuclear receptor coactivator level, upstream and independently of NF-kappa-B. Suppresses both NCOA2- and NCOA3-induced enhancement of GR transactivation. Involved in TNF-alpha-induced activation of NF-kappa-B via a TRAF2-dependent pathway. Acts as a downstream mediator for CASP8-induced activation of NF-kappa-B. Required for the activation of CASP8 in FAS-mediated apoptosis. Required for histone gene transcription and progression through S phase. This is CASP8-associated protein 2 from Homo sapiens (Human).